We begin with the raw amino-acid sequence, 306 residues long: Methionyl-tRNA formyltransferase (306 aa).

105–108 (SLLP) contributes to the (6S)-5,6,7,8-tetrahydrofolate binding site.

The protein belongs to the Fmt family.

The enzyme catalyses L-methionyl-tRNA(fMet) + (6R)-10-formyltetrahydrofolate = N-formyl-L-methionyl-tRNA(fMet) + (6S)-5,6,7,8-tetrahydrofolate + H(+). Attaches a formyl group to the free amino group of methionyl-tRNA(fMet). The formyl group appears to play a dual role in the initiator identity of N-formylmethionyl-tRNA by promoting its recognition by IF2 and preventing the misappropriation of this tRNA by the elongation apparatus. This chain is Methionyl-tRNA formyltransferase, found in Rubrobacter xylanophilus (strain DSM 9941 / JCM 11954 / NBRC 16129 / PRD-1).